Reading from the N-terminus, the 135-residue chain is Large ribosomal subunit protein eL27z (135 aa).

Belongs to the eukaryotic ribosomal protein eL27 family.

In Arabidopsis thaliana (Mouse-ear cress), this protein is Large ribosomal subunit protein eL27z (RPL27A).